We begin with the raw amino-acid sequence, 512 residues long: Probable DNA ligase (512 aa).

Glutamate 208 is an ATP binding site. Lysine 210 acts as the N6-AMP-lysine intermediate in catalysis. ATP is bound by residues arginine 215, arginine 230, glutamate 259, phenylalanine 299, arginine 374, and lysine 380.

The protein belongs to the ATP-dependent DNA ligase family. It depends on Mg(2+) as a cofactor.

It catalyses the reaction ATP + (deoxyribonucleotide)n-3'-hydroxyl + 5'-phospho-(deoxyribonucleotide)m = (deoxyribonucleotide)n+m + AMP + diphosphate.. In terms of biological role, DNA ligase that seals nicks in double-stranded DNA during DNA replication, DNA recombination and DNA repair. This chain is Probable DNA ligase, found in Streptomyces coelicolor (strain ATCC BAA-471 / A3(2) / M145).